The chain runs to 208 residues: Uracil phosphoribosyltransferase (208 aa).

5-phospho-alpha-D-ribose 1-diphosphate is bound by residues Arg78, Arg103, and 130–138 (DPMLATGGS). Residues Ile193 and 198–200 (GDA) contribute to the uracil site. Position 199 (Asp199) interacts with 5-phospho-alpha-D-ribose 1-diphosphate.

It belongs to the UPRTase family. Mg(2+) is required as a cofactor.

It carries out the reaction UMP + diphosphate = 5-phospho-alpha-D-ribose 1-diphosphate + uracil. It functions in the pathway pyrimidine metabolism; UMP biosynthesis via salvage pathway; UMP from uracil: step 1/1. With respect to regulation, allosterically activated by GTP. Functionally, catalyzes the conversion of uracil and 5-phospho-alpha-D-ribose 1-diphosphate (PRPP) to UMP and diphosphate. The polypeptide is Uracil phosphoribosyltransferase (Shewanella oneidensis (strain ATCC 700550 / JCM 31522 / CIP 106686 / LMG 19005 / NCIMB 14063 / MR-1)).